Here is a 360-residue protein sequence, read N- to C-terminus: Putative transcription factor A494R (360 aa).

A zinc finger spans residues 153–175; sequence CTCGGQMELWVNSTQSDLVCNEC.

Belongs to the nucleo-cytoplasmic large DNA viruses (NCLDVs) VLTF-3 family.

Putative transcription factor. The protein is Putative transcription factor A494R of Paramecium bursaria Chlorella virus 1 (PBCV-1).